The sequence spans 635 residues: Threonine--tRNA ligase (635 aa).

The segment at 1 to 152 is editing domain; that stretch reads MQLLLIHSDY…AKAAVKPEAA (152 aa). Residues 215-514 are catalytic; the sequence is PHVELMRRLE…TEEGKVPMLP (300 aa). The Zn(2+) site is built by Cys-307, His-359, and His-483.

Belongs to the class-II aminoacyl-tRNA synthetase family. As to quaternary structure, homodimer. Zn(2+) is required as a cofactor.

The protein localises to the cytoplasm. It catalyses the reaction tRNA(Thr) + L-threonine + ATP = L-threonyl-tRNA(Thr) + AMP + diphosphate + H(+). Functionally, catalyzes the attachment of threonine to tRNA(Thr) in a two-step reaction: L-threonine is first activated by ATP to form Thr-AMP and then transferred to the acceptor end of tRNA(Thr). Also edits incorrectly charged L-seryl-tRNA(Thr). The sequence is that of Threonine--tRNA ligase from Methanosarcina acetivorans (strain ATCC 35395 / DSM 2834 / JCM 12185 / C2A).